An 829-amino-acid chain; its full sequence is MKMTRRAFVKANAAASAAAVAGITLPASAANLIASSDQTKITWDKAPCRFCGTGCSVLVGTQNGKVVATQGDPEAPVNKGLNCIKGYFLSKIMYGQDRLTQPLLRMKDGKYDKEGDFTPVSWDVAFDTMAEKWKASLAKKGPTSIGMFGSGQWTVMEGYAAAKMMKAGFRSNNIDPNARHCMASAVVGFMRTFGIDEPMGCYDDFEHADSFVLWGSNMAEMHPVLWTRITDRRLSHPHVKVNVLSTYYHRSFELADSGYIFKPQSDLAIANFIANYIIQNDAVNWDFVNKHTNFKQATTDIGYGLRDDDPLQKQAKNPNSGNMTSISFEEYKKSVAPYTVEKASEMSGVAQDKLIELAKQYADPNTKVMSLWTMGMNQHTRGVWMNSLVYNIHLLTGKIATPGNSPFSLTGQPSACGTAREVGTFAHRLPADMVVANPKHRAIAEKIWKLPEGTIPPKPGFHAVLQDRMLHDGVLNCYWVQCNNNMQAGPNINGERLPGYRNPENFIVVSDPYPTATAQAADLILPTAMWIEKEGAYGNAERRTQAWYQQVGTVGEAKSDLWQVMEFSKRFKMEEVWPEELLAKAPQYRGKTMYDMLFANGQVDKFPLSEARQLNDDSHHFGFYVQKGLFEEYAEFGRGHGHDLAPYDVYHTVRGLRWPVVDGKETLWRYKEGSDPYAKKGSGWDFYGKPDGKALIISAPYEAPPESPDAEYDMWLCTGRVLEHWHTGTMTRRVPELYKAVPDAVCYIHPEDAKARGLRRGDEVLISNKRGEVRVRVETRGRNRPPQGLVFVPFFDARILINKLILDATDPLSKQTDFKKCPVKITKVA.

Residues 1 to 30 (MKMTRRAFVKANAAASAAAVAGITLPASAA) constitute a signal peptide (tat-type signal). The 4Fe-4S Mo/W bis-MGD-type domain maps to 41 to 97 (ITWDKAPCRFCGTGCSVLVGTQNGKVVATQGDPEAPVNKGLNCIKGYFLSKIMYGQD). [4Fe-4S] cluster is bound by residues Cys48, Cys51, Cys55, and Cys83. Mo-bis(molybdopterin guanine dinucleotide) is bound by residues Lys85, Gln152, Asn177, Cys181, 214–221 (WGSNMAEM), 245–249 (STYYH), 264–266 (QSD), Met374, Gln378, Asn484, 510–511 (SD), Lys533, Asp560, and 718–727 (TGRVLEHWHT). Phe794 contributes to the substrate binding site. Mo-bis(molybdopterin guanine dinucleotide) is bound by residues Asn802 and Lys819.

Belongs to the prokaryotic molybdopterin-containing oxidoreductase family. NasA/NapA/NarB subfamily. As to quaternary structure, component of the periplasmic nitrate reductase NapAB complex composed of NapA and NapB. It depends on [4Fe-4S] cluster as a cofactor. The cofactor is Mo-bis(molybdopterin guanine dinucleotide). In terms of processing, predicted to be exported by the Tat system. The position of the signal peptide cleavage has not been experimentally proven.

Its subcellular location is the periplasm. It catalyses the reaction 2 Fe(II)-[cytochrome] + nitrate + 2 H(+) = 2 Fe(III)-[cytochrome] + nitrite + H2O. In terms of biological role, catalytic subunit of the periplasmic nitrate reductase complex NapAB. Receives electrons from NapB and catalyzes the reduction of nitrate to nitrite. The sequence is that of Periplasmic nitrate reductase from Vibrio vulnificus (strain YJ016).